A 427-amino-acid polypeptide reads, in one-letter code: Adenylosuccinate synthetase (427 aa).

GTP-binding positions include 12–18 (GDEGKGK) and 40–42 (GHT). Asp-13 functions as the Proton acceptor in the catalytic mechanism. Mg(2+)-binding residues include Asp-13 and Gly-40. IMP contacts are provided by residues 13 to 16 (DEGK), 38 to 41 (NAGH), Thr-128, Arg-142, Gln-223, Thr-238, and Arg-302. Residue His-41 is the Proton donor of the active site. Substrate is bound at residue 298-304 (TVTGRAR). Residues Arg-304, 330-332 (RLD), and 412-414 (SVG) each bind GTP.

It belongs to the adenylosuccinate synthetase family. In terms of assembly, homodimer. Requires Mg(2+) as cofactor.

Its subcellular location is the cytoplasm. It catalyses the reaction IMP + L-aspartate + GTP = N(6)-(1,2-dicarboxyethyl)-AMP + GDP + phosphate + 2 H(+). The protein operates within purine metabolism; AMP biosynthesis via de novo pathway; AMP from IMP: step 1/2. Plays an important role in the de novo pathway of purine nucleotide biosynthesis. Catalyzes the first committed step in the biosynthesis of AMP from IMP. This Brachyspira hyodysenteriae (strain ATCC 49526 / WA1) protein is Adenylosuccinate synthetase.